The primary structure comprises 104 residues: Replication restart protein PriB (104 aa).

Residues 1 to 101 (MTNRLVLSGT…LHAEQIELID (101 aa)) form the SSB domain.

It belongs to the PriB family. Homodimer. Interacts with PriA and DnaT. Component of the replication restart primosome. Primosome assembly occurs via a 'hand-off' mechanism. PriA binds to replication forks, subsequently PriB then DnaT bind; DnaT then displaces ssDNA to generate the helicase loading substrate.

Involved in the restart of stalled replication forks, which reloads the replicative helicase on sites other than the origin of replication; the PriA-PriB pathway is the major replication restart pathway. During primosome assembly it facilitates complex formation between PriA and DnaT on DNA; stabilizes PriA on DNA. Stimulates the DNA unwinding activity of PriA helicase. The sequence is that of Replication restart protein PriB from Escherichia coli (strain ATCC 8739 / DSM 1576 / NBRC 3972 / NCIMB 8545 / WDCM 00012 / Crooks).